A 282-amino-acid polypeptide reads, in one-letter code: 3-methyl-2-oxobutanoate hydroxymethyltransferase (282 aa).

Mg(2+)-binding residues include Asp-44 and Asp-83. Residues 44–45 (DS), Asp-83, and Lys-113 each bind 3-methyl-2-oxobutanoate. Glu-115 contributes to the Mg(2+) binding site. Catalysis depends on Glu-182, which acts as the Proton acceptor.

It belongs to the PanB family. Homodecamer; pentamer of dimers. Mg(2+) serves as cofactor.

It localises to the cytoplasm. It carries out the reaction 3-methyl-2-oxobutanoate + (6R)-5,10-methylene-5,6,7,8-tetrahydrofolate + H2O = 2-dehydropantoate + (6S)-5,6,7,8-tetrahydrofolate. The protein operates within cofactor biosynthesis; (R)-pantothenate biosynthesis; (R)-pantoate from 3-methyl-2-oxobutanoate: step 1/2. Functionally, catalyzes the reversible reaction in which hydroxymethyl group from 5,10-methylenetetrahydrofolate is transferred onto alpha-ketoisovalerate to form ketopantoate. This Dehalococcoides mccartyi (strain ATCC BAA-2266 / KCTC 15142 / 195) (Dehalococcoides ethenogenes (strain 195)) protein is 3-methyl-2-oxobutanoate hydroxymethyltransferase.